The primary structure comprises 607 residues: Siderochrome iron transporter 2 (607 aa).

Positions 1-46 (MGLFGSFGARNKATPQVPPGAVAKAPEGTPKGPETNDQPDMDSSRL) are disordered. The next 13 membrane-spanning stretches (helical) occupy residues 86-106 (VWAT…QSGI), 129-149 (ILSS…LNLW), 152-172 (AEGF…LAAC), 180-200 (AGYV…DVFV), 210-230 (AFTF…APLA), 242-262 (WAYG…AVVF), 297-317 (IIGA…FSLA), 326-346 (SAAF…FAAW), 367-387 (LGAC…DLYF), 404-424 (YMTQ…GLWV), 432-452 (HTCL…MIHF), 459-479 (IGYV…LVIG), and 499-519 (FIGL…AAIY). The N-linked (GlcNAc...) asparagine glycan is linked to Asn538. Residues 573-593 (FGAVAATCILILGIPAIAVWK) form a helical membrane-spanning segment.

The protein belongs to the major facilitator superfamily.

It localises to the cell membrane. Major facilitator transporter involved in ferrichrome (FC) uptake. This is Siderochrome iron transporter 2 from Aspergillus fumigatus (strain ATCC MYA-4609 / CBS 101355 / FGSC A1100 / Af293) (Neosartorya fumigata).